A 198-amino-acid chain; its full sequence is Recombination protein RecR (198 aa).

Residues 56 to 71 (CDICGNVSEEPTCRIC) form a C4-type zinc finger. Residues 79–175 (AVVCVVEEPK…NVTRLASGLP (97 aa)) enclose the Toprim domain.

This sequence belongs to the RecR family.

In terms of biological role, may play a role in DNA repair. It seems to be involved in an RecBC-independent recombinational process of DNA repair. It may act with RecF and RecO. In Saccharopolyspora erythraea (strain ATCC 11635 / DSM 40517 / JCM 4748 / NBRC 13426 / NCIMB 8594 / NRRL 2338), this protein is Recombination protein RecR.